Here is a 93-residue protein sequence, read N- to C-terminus: Small ribosomal subunit protein uS15 (93 aa).

It belongs to the universal ribosomal protein uS15 family. As to quaternary structure, part of the 30S ribosomal subunit. Forms a bridge to the 50S subunit in the 70S ribosome, contacting the 23S rRNA.

One of the primary rRNA binding proteins, it binds directly to 16S rRNA where it helps nucleate assembly of the platform of the 30S subunit by binding and bridging several RNA helices of the 16S rRNA. Functionally, forms an intersubunit bridge (bridge B4) with the 23S rRNA of the 50S subunit in the ribosome. This is Small ribosomal subunit protein uS15 from Anaplasma marginale (strain St. Maries).